The sequence spans 234 residues: Ubiquitin carboxyl-terminal hydrolase 3 (234 aa).

The UCH catalytic domain occupies 12–232 (RWLPLESNPD…LNFNLIAISK (221 aa)). The active-site Nucleophile is cysteine 101. Histidine 172 functions as the Proton donor in the catalytic mechanism.

Belongs to the peptidase C12 family.

The catalysed reaction is Thiol-dependent hydrolysis of ester, thioester, amide, peptide and isopeptide bonds formed by the C-terminal Gly of ubiquitin (a 76-residue protein attached to proteins as an intracellular targeting signal).. The protein is Ubiquitin carboxyl-terminal hydrolase 3 of Arabidopsis thaliana (Mouse-ear cress).